Consider the following 767-residue polypeptide: General transcription and DNA repair factor IIH helicase/translocase subunit XPB1 (767 aa).

The segment at 1-51 (MGNGERGRPNKKMKYGGKDDQKMKNIQNAEDYYDDADEDSRDGEGEEKKRD) is disordered. Positions 31-41 (DYYDDADEDSR) are enriched in acidic residues. Basic and acidic residues predominate over residues 42–51 (DGEGEEKKRD). In terms of domain architecture, Helicase ATP-binding spans 293-455 (MFGNGRARSG…DLNFLIGPKL (163 aa)). 306–313 (LPCGAGKS) provides a ligand contact to ATP. The DEVH box motif lies at 408-411 (DEVH). The region spanning 510–676 (RACEFLIRFH…SLPPPDAGSS (167 aa)) is the Helicase C-terminal domain. The disordered stretch occupies residues 742–767 (RHKSGQQFKKPKDPTKRHNLFKKRYV). The short motif at 750-766 (KKPKDPTKRHNLFKKRY) is the Nuclear localization signal element. Over residues 758–767 (RHNLFKKRYV) the composition is skewed to basic residues.

This sequence belongs to the helicase family. RAD25/XPB subfamily. In terms of assembly, component of the 7-subunit TFIIH core complex composed of XPB, XPD, TFB1/GTF2H1, GTF2H2/P44, TFB4/GTF2H3, TFB2/GTF2H4 and TFB5/GTF2H5, which is active in NER. The core complex associates with the 3-subunit CDK-activating kinase (CAK) module composed of CYCH1/cyclin H1, CDKD and MAT1/At4g30820 to form the 10-subunit holoenzyme (holo-TFIIH) active in transcription. In terms of tissue distribution, expressed ubiquitously.

It localises to the nucleus. It carries out the reaction Couples ATP hydrolysis with the unwinding of duplex DNA by translocating in the 3'-5' direction.. The catalysed reaction is ATP + H2O = ADP + phosphate + H(+). In terms of biological role, ATP-dependent 3'-5' DNA helicase/translocase; binds dsDNA rather than ssDNA, unzipping it in a translocase rather than classical helicase activity. Component of the general transcription and DNA repair factor IIH (TFIIH) core complex. When complexed to CDK-activating kinase (CAK), involved in RNA transcription by RNA polymerase II. The ATPase activity of XPB/ERCC3, but not its helicase activity, is required for DNA opening; it may wrap around the damaged DNA wedging it open, causing localized melting and twisting that allows XPD/ERCC2 helicase to anchor. The ATP-dependent helicase activity of XPB/ERCC3 may be required for promoter escape. Also involved in transcription-coupled nucleotide excision repair (NER) of damaged DNA. In NER, TFIIH acts by opening DNA around the lesion to allow the excision of the damaged oligonucleotide and its replacement by a new DNA fragment. The structure of the TFIIH transcription complex differs from the NER-TFIIH complex. Partially complements UV sensitivity of a yeast SSL2 mutation. Required during the early stages of development, including seed germination. This Arabidopsis thaliana (Mouse-ear cress) protein is General transcription and DNA repair factor IIH helicase/translocase subunit XPB1 (XPB1).